We begin with the raw amino-acid sequence, 418 residues long: Putative ion-transport protein YfeO (418 aa).

12 helical membrane passes run 10–30, 54–74, 99–119, 120–140, 149–169, 186–206, 223–243, 258–278, 300–320, 322–342, 343–363, and 371–391; these read LLLS…LIMV, DSPL…GLVI, ALPG…SLGP, EHPI…RLLP, ILAS…AALI, LFAP…FFHP, ILSG…AVWC, VFVL…GGPV, DYFL…ASGF, GGRI…LHEH, VPAV…VLVV, and LFMA…CIVM.

This sequence belongs to the chloride channel (TC 2.A.49) family.

The protein localises to the cell membrane. This chain is Putative ion-transport protein YfeO, found in Escherichia coli O45:K1 (strain S88 / ExPEC).